Here is a 279-residue protein sequence, read N- to C-terminus: uncharacterized protein (279 aa).

This is an uncharacterized protein from Bacillus subtilis (strain 168).